Here is an 819-residue protein sequence, read N- to C-terminus: Outer membrane usher protein CssD (819 aa).

Belongs to the fimbrial export usher family.

It is found in the cell outer membrane. In terms of biological role, involved in the export and assembly of C6 fimbrial subunits across the outer membrane. The chain is Outer membrane usher protein CssD (cssD) from Escherichia coli.